Reading from the N-terminus, the 83-residue chain is Snake venom metalloproteinase BnP1 (83 aa).

Residues 8 to 83 (SYIELAVVAD…NPQCIINQPI (76 aa)) enclose the Peptidase M12B domain. 3 residues coordinate Ca(2+): E11, C77, and N80.

It belongs to the venom metalloproteinase (M12B) family. P-I subfamily. Monomer. Requires Zn(2+) as cofactor. In terms of tissue distribution, expressed by the venom gland.

It localises to the secreted. Inhibited by EDTA. This protein is a zinc protease from snake venom that is devoid of significant myotoxic and hemorrhagic activities. It hydrolyzes the Aalpha-chain and more slowly the Bbeta-chain of fibrin and fibrinogen, without affecting the gamma-chains. It induces cell detachment and a apoptosis (anoikis) in endothelial cells. The protein is Snake venom metalloproteinase BnP1 of Bothrops pauloensis (Neuwied's lancehead).